The following is a 141-amino-acid chain: Small ribosomal subunit protein uS12 (141 aa).

The protein belongs to the universal ribosomal protein uS12 family. Part of the 30S ribosomal subunit.

With S4 and S5 plays an important role in translational accuracy. Located at the interface of the 30S and 50S subunits. In Methanothermobacter thermautotrophicus (strain ATCC 29096 / DSM 1053 / JCM 10044 / NBRC 100330 / Delta H) (Methanobacterium thermoautotrophicum), this protein is Small ribosomal subunit protein uS12.